The sequence spans 289 residues: MVTHCEHQYLNTVREILANGVRRGDRTGVGTLSVFGDQAKYSLRGQFPLLTTKRVFWRGVLEELLWFIRGSTDSNELSARGVKIWDANGSRDFLARAGLGHREPGDLGPVYGFQWRHFGAAYVDSKTDYRGQGVDQLRDLIGEIKRNPESRRLVLTAWNPADLPAMALPPCHLLCQFYVAGGELSCQLYQRSGDMGLGVPFNIASYSLLTYMVAHLTGLEPGDFIHVLGDAHVYLNHVEPLKLQLTRSPRPFPRLRILRRVEDIDDFRAEDFALEGYHPHAAIPMEMAV.

DUMP-binding positions include Arg26 and Arg151–Arg152. Cys171 serves as the catalytic Nucleophile. Residues Arg191–Asp194, Asn202, and His232–Tyr234 contribute to the dUMP site. Residue Asp194 participates in (6R)-5,10-methylene-5,6,7,8-tetrahydrofolate binding. Residue Ala288 participates in (6R)-5,10-methylene-5,6,7,8-tetrahydrofolate binding.

Belongs to the thymidylate synthase family. Homodimer.

It carries out the reaction dUMP + (6R)-5,10-methylene-5,6,7,8-tetrahydrofolate = 7,8-dihydrofolate + dTMP. Its pathway is pyrimidine metabolism; dTTP biosynthesis. This is Thymidylate synthase from Equus caballus (Horse).